The chain runs to 1074 residues: Phospholipase D1 (1074 aa).

Residues 81-212 (VKAQVLEVER…TEFLDVSQLS (132 aa)) enclose the PX domain. A PH domain is found at 219 to 328 (PKGLEGMIMK…WGGAIEEFIQ (110 aa)). 2 S-palmitoyl cysteine lipidation sites follow: Cys240 and Cys241. Residues 459–486 (YLWAHHEKLVIIDQSVAFVGGIDLAYGR) form the PLD phosphodiesterase 1 domain. The catalytic stretch occupies residues 463 to 928 (HHEKLVIIDQ…MLGKRDSEMA (466 aa)). Ser499, Ser561, and Ser629 each carry phosphoserine. The region spanning 891–918 (ELIYVHSKLLIADDNTVIIGSANINDRS) is the PLD phosphodiesterase 2 domain.

It belongs to the phospholipase D family. In terms of assembly, interacts with PIP5K1B. Phosphorylated on serine and threonine residues. Post-translationally, it is uncertain whether palmitoylation is on Cys-240 and/or Cys-241. Palmitoylation is required prior to phosphorylation.

It is found in the cytoplasm. The protein resides in the perinuclear region. The protein localises to the endoplasmic reticulum membrane. Its subcellular location is the golgi apparatus membrane. It localises to the late endosome membrane. The enzyme catalyses a 1,2-diacyl-sn-glycero-3-phosphocholine + H2O = a 1,2-diacyl-sn-glycero-3-phosphate + choline + H(+). It carries out the reaction ethanol + a 1,2-diacyl-sn-glycero-3-phosphocholine = 1,2-diacyl-sn-glycero-3-phosphoethanol + choline. The catalysed reaction is 1,2-dihexadecanoyl-sn-glycero-3-phosphocholine + H2O = 1,2-dihexadecanoyl-sn-glycero-3-phosphate + choline + H(+). Its activity is regulated as follows. Stimulated by phosphatidylinositol 4,5-bisphosphate and phosphatidylinositol 3,4,5-trisphosphate, activated by the phosphokinase C-alpha, by the ADP-ribosylation factor-1 (ARF-1), and to a lesser extent by GTP-binding proteins: RHO A, RAC-1 and CDC42. Inhibited by oleate. Its function is as follows. Function as phospholipase selective for phosphatidylcholine. Implicated as a critical step in numerous cellular pathways, including signal transduction, membrane trafficking, and the regulation of mitosis. May be involved in the regulation of perinuclear intravesicular membrane traffic. In Rattus norvegicus (Rat), this protein is Phospholipase D1.